A 307-amino-acid polypeptide reads, in one-letter code: NAD kinase 1 (307 aa).

Aspartate 67 (proton acceptor) is an active-site residue. Residues 67-68 (DG), 149-150 (NE), arginine 160, aspartate 181, and 192-197 (TCYTSS) contribute to the NAD(+) site.

It belongs to the NAD kinase family. The cofactor is a divalent metal cation.

Its subcellular location is the cytoplasm. The catalysed reaction is NAD(+) + ATP = ADP + NADP(+) + H(+). In terms of biological role, involved in the regulation of the intracellular balance of NAD and NADP, and is a key enzyme in the biosynthesis of NADP. Catalyzes specifically the phosphorylation on 2'-hydroxyl of the adenosine moiety of NAD to yield NADP. Essential for photoheterotrophic growth. Has a significant function in the oxidative pentose phosphate (OPP) pathway for glucose catabolism under photoheterotrophic conditions. Is also involved in cellular redox homeostasis. The sequence is that of NAD kinase 1 from Synechocystis sp. (strain ATCC 27184 / PCC 6803 / Kazusa).